Consider the following 150-residue polypeptide: Large ribosomal subunit protein uL15 (150 aa).

The protein belongs to the universal ribosomal protein uL15 family. As to quaternary structure, part of the 50S ribosomal subunit.

Functionally, binds to the 23S rRNA. This Anaplasma marginale (strain Florida) protein is Large ribosomal subunit protein uL15.